The sequence spans 358 residues: MNEKRLFTEAQTENEAVDFTPKREFHGEMHIEKDEPVIEDRFVEQTFEHIVQPRSRWWKTGLALTALLFCFAVIAQSIQWLVDTWQQNQWIYFVFSLVTCLVVLLGVSSLGKEWLRLVKLKKRLSLQQKSQQILRESAVNLGQDFCAEKHQQIKALCTEMAQMLKLSSEDPGLIQWQNQLHDAYSAQEVAHLFSQTVLHPFDVQIKKLISKSALEAAVIVAVSPLAVIDMFFLSWRNIRLVNQIAQIYGIELGYWSRLRLLKMVLLNLAFAGATEVVQDIGLDWLSQDLTAKLSARAAQGIGVGLLTARLGIKAMEFCRPLAFQAGEKPRLNHIQQELLGQLRSTFFRSNKTKVKQQV.

Transmembrane regions (helical) follow at residues 62–82 (LALT…QWLV), 90–110 (WIYF…VSSL), and 213–233 (ALEA…MFFL).

Belongs to the UPF0283 family.

The protein resides in the cell inner membrane. The chain is UPF0283 membrane protein PM0909 from Pasteurella multocida (strain Pm70).